We begin with the raw amino-acid sequence, 395 residues long: Flagellin D (395 aa).

Belongs to the bacterial flagellin family.

It is found in the secreted. Its subcellular location is the bacterial flagellum. In terms of biological role, flagellin is the subunit protein which polymerizes to form the filaments of bacterial flagella. The protein is Flagellin D (flaD) of Rhizobium meliloti (Ensifer meliloti).